We begin with the raw amino-acid sequence, 93 residues long: Small ribosomal subunit protein uS19 (93 aa).

Belongs to the universal ribosomal protein uS19 family.

Protein S19 forms a complex with S13 that binds strongly to the 16S ribosomal RNA. The sequence is that of Small ribosomal subunit protein uS19 from Parafrankia sp. (strain EAN1pec).